Here is an 89-residue protein sequence, read N- to C-terminus: Large ribosomal subunit protein bL27 (89 aa).

This sequence belongs to the bacterial ribosomal protein bL27 family.

This chain is Large ribosomal subunit protein bL27, found in Bacteroides thetaiotaomicron (strain ATCC 29148 / DSM 2079 / JCM 5827 / CCUG 10774 / NCTC 10582 / VPI-5482 / E50).